The following is a 316-amino-acid chain: 4-hydroxy-3-methylbut-2-enyl diphosphate reductase (316 aa).

Residue Cys12 participates in [4Fe-4S] cluster binding. 2 residues coordinate (2E)-4-hydroxy-3-methylbut-2-enyl diphosphate: His41 and His74. The dimethylallyl diphosphate site is built by His41 and His74. The isopentenyl diphosphate site is built by His41 and His74. A [4Fe-4S] cluster-binding site is contributed by Cys96. A (2E)-4-hydroxy-3-methylbut-2-enyl diphosphate-binding site is contributed by His124. Residue His124 coordinates dimethylallyl diphosphate. His124 provides a ligand contact to isopentenyl diphosphate. The active-site Proton donor is Glu126. Residue Thr167 participates in (2E)-4-hydroxy-3-methylbut-2-enyl diphosphate binding. Cys197 lines the [4Fe-4S] cluster pocket. Residues Ser225, Ser226, Asn227, and Ser269 each coordinate (2E)-4-hydroxy-3-methylbut-2-enyl diphosphate. Residues Ser225, Ser226, Asn227, and Ser269 each coordinate dimethylallyl diphosphate. Residues Ser225, Ser226, Asn227, and Ser269 each coordinate isopentenyl diphosphate.

This sequence belongs to the IspH family. As to quaternary structure, homodimer. Requires [4Fe-4S] cluster as cofactor.

The enzyme catalyses isopentenyl diphosphate + 2 oxidized [2Fe-2S]-[ferredoxin] + H2O = (2E)-4-hydroxy-3-methylbut-2-enyl diphosphate + 2 reduced [2Fe-2S]-[ferredoxin] + 2 H(+). The catalysed reaction is dimethylallyl diphosphate + 2 oxidized [2Fe-2S]-[ferredoxin] + H2O = (2E)-4-hydroxy-3-methylbut-2-enyl diphosphate + 2 reduced [2Fe-2S]-[ferredoxin] + 2 H(+). It participates in isoprenoid biosynthesis; dimethylallyl diphosphate biosynthesis; dimethylallyl diphosphate from (2E)-4-hydroxy-3-methylbutenyl diphosphate: step 1/1. Its pathway is isoprenoid biosynthesis; isopentenyl diphosphate biosynthesis via DXP pathway; isopentenyl diphosphate from 1-deoxy-D-xylulose 5-phosphate: step 6/6. In terms of biological role, catalyzes the conversion of 1-hydroxy-2-methyl-2-(E)-butenyl 4-diphosphate (HMBPP) into a mixture of isopentenyl diphosphate (IPP) and dimethylallyl diphosphate (DMAPP). Acts in the terminal step of the DOXP/MEP pathway for isoprenoid precursor biosynthesis. This Pectobacterium atrosepticum (strain SCRI 1043 / ATCC BAA-672) (Erwinia carotovora subsp. atroseptica) protein is 4-hydroxy-3-methylbut-2-enyl diphosphate reductase.